The chain runs to 815 residues: Patatin-like phospholipase domain-containing protein LELG_00944 (815 aa).

A compositionally biased stretch (polar residues) spans 41–50 (VSTTAPTTPL). Disordered stretches follow at residues 41-105 (VSTT…PQLK) and 140-166 (SENL…STSP). Over residues 54–73 (LDMGDLSLLGGELGNGSDDV) the composition is skewed to low complexity. Residues 74–94 (VVGDDDDDDDDDDDDDDDDDD) show a composition bias toward acidic residues. Residues 148–160 (KRTKFAKSSKSSK) are compositionally biased toward basic residues. A helical membrane pass occupies residues 185 to 205 (WPILTFVVIWVTILGFLYLAV). The PNPLA domain occupies 360 to 552 (LCLSGGACFA…RTDIPIDALN (193 aa)). Positions 391-395 (GTSGG) match the GXSXG motif. The Nucleophile role is filled by Ser393. Asp539 functions as the Proton acceptor in the catalytic mechanism. The tract at residues 753–815 (GSTLRDDDAD…LTKERRHTVY (63 aa)) is disordered. The segment covering 759 to 799 (DDADADVDEDDNEDEDEEDEDENDYEEYDVEDLDDPYESDA) has biased composition (acidic residues).

It belongs to the PLPL family.

The protein resides in the membrane. In terms of biological role, probable lipid hydrolase. This chain is Patatin-like phospholipase domain-containing protein LELG_00944, found in Lodderomyces elongisporus (strain ATCC 11503 / CBS 2605 / JCM 1781 / NBRC 1676 / NRRL YB-4239) (Yeast).